Consider the following 374-residue polypeptide: GDSL esterase/lipase At1g71250 (374 aa).

The signal sequence occupies residues methionine 1–glutamine 28. Serine 48 functions as the Nucleophile in the catalytic mechanism. Asparagine 162 is a glycosylation site (N-linked (GlcNAc...) asparagine). Residues aspartate 338 and histidine 341 contribute to the active site.

Belongs to the 'GDSL' lipolytic enzyme family.

The protein localises to the secreted. This Arabidopsis thaliana (Mouse-ear cress) protein is GDSL esterase/lipase At1g71250.